We begin with the raw amino-acid sequence, 223 residues long: UPF0441 protein YgiB (223 aa).

The span at Thr-178–Thr-195 shows a compositional bias: low complexity. The disordered stretch occupies residues Thr-178–Gly-223. Residues Ala-204–Gly-223 show a composition bias toward polar residues.

This sequence belongs to the UPF0441 family.

This chain is UPF0441 protein YgiB, found in Shigella dysenteriae serotype 1 (strain Sd197).